A 199-amino-acid chain; its full sequence is MAKVLVLYYSAYGHIEAMANAVAEGAREAGAQVDIKRVPELVPPDVAKASHYKLDQAAPVATIEDLANYDAIVIGTGTRFGRMASQMSNFLDQAGGLWARGALNGKVGGAFTSTATQHGGQETTLFSIITNLLHFGMVVVGLNYGFGDQMRLDQVTGGAPYGATTITGGDGSRQPSETELAGARYQGKTIAETAIKLHG.

Residues 4–190 (VLVLYYSAYG…AGARYQGKTI (187 aa)) form the Flavodoxin-like domain. FMN-binding positions include 10–15 (SAYGHI) and 78–80 (TRF). Residue Tyr12 coordinates NAD(+). Trp98 lines the substrate pocket. FMN is bound by residues 113–119 (STATQHG) and His134.

The protein belongs to the WrbA family. The cofactor is FMN.

The catalysed reaction is a quinone + NADH + H(+) = a quinol + NAD(+). It carries out the reaction a quinone + NADPH + H(+) = a quinol + NADP(+). This chain is NAD(P)H dehydrogenase (quinone), found in Rhodopseudomonas palustris (strain TIE-1).